The following is a 236-amino-acid chain: Small ribosomal subunit protein eS6 (236 aa).

This sequence belongs to the eukaryotic ribosomal protein eS6 family. As to quaternary structure, component of the small ribosomal subunit. Mature ribosomes consist of a small (40S) and a large (60S) subunit. The 40S subunit contains about 32 different proteins and 1 molecule of RNA (18S). The 60S subunit contains 45 different proteins and 3 molecules of RNA (25S, 5.8S and 5S).

The protein localises to the cytoplasm. In terms of biological role, component of the ribosome, a large ribonucleoprotein complex responsible for the synthesis of proteins in the cell. The small ribosomal subunit (SSU) binds messenger RNAs (mRNAs) and translates the encoded message by selecting cognate aminoacyl-transfer RNA (tRNA) molecules. The large subunit (LSU) contains the ribosomal catalytic site termed the peptidyl transferase center (PTC), which catalyzes the formation of peptide bonds, thereby polymerizing the amino acids delivered by tRNAs into a polypeptide chain. The nascent polypeptides leave the ribosome through a tunnel in the LSU and interact with protein factors that function in enzymatic processing, targeting, and the membrane insertion of nascent chains at the exit of the ribosomal tunnel. RPS6A is involved in nucleolar processing of pre-18S ribosomal RNA and ribosome assembly. This is Small ribosomal subunit protein eS6 (RPS6A) from Candida albicans (strain SC5314 / ATCC MYA-2876) (Yeast).